The chain runs to 275 residues: NH(3)-dependent NAD(+) synthetase (275 aa).

46–53 (GISGGQDS) serves as a coordination point for ATP. Position 52 (aspartate 52) interacts with Mg(2+). A deamido-NAD(+)-binding site is contributed by arginine 140. Threonine 160 contributes to the ATP binding site. Glutamate 165 provides a ligand contact to Mg(2+). Residues lysine 173 and aspartate 180 each coordinate deamido-NAD(+). 2 residues coordinate ATP: lysine 189 and threonine 211. 260–261 (HK) contributes to the deamido-NAD(+) binding site.

The protein belongs to the NAD synthetase family. In terms of assembly, homodimer.

It catalyses the reaction deamido-NAD(+) + NH4(+) + ATP = AMP + diphosphate + NAD(+) + H(+). The protein operates within cofactor biosynthesis; NAD(+) biosynthesis; NAD(+) from deamido-NAD(+) (ammonia route): step 1/1. Functionally, catalyzes the ATP-dependent amidation of deamido-NAD to form NAD. Uses ammonia as a nitrogen source. This is NH(3)-dependent NAD(+) synthetase from Escherichia coli O127:H6 (strain E2348/69 / EPEC).